Here is a 167-residue protein sequence, read N- to C-terminus: Brain ribonuclease (167 aa).

The signal sequence occupies residues 1–26 (MALKSLVLLSLLVLVLLLVQVQPSLG). The substrate site is built by Lys33 and Arg36. The active-site Proton acceptor is His38. 4 cysteine pairs are disulfide-bonded: Cys52–Cys110, Cys66–Cys121, Cys84–Cys136, and Cys91–Cys98. Residue 67-71 (KPVNT) participates in substrate binding. Residue Asn88 is glycosylated (N-linked (GlcNAc...) asparagine). Lys92 and Arg111 together coordinate substrate. The active-site Proton donor is His145. Thr155 carries an O-linked (GalNAc...) threonine glycan. Ser159 is a glycosylation site (O-linked (GalNAc...) serine).

It belongs to the pancreatic ribonuclease family.

The protein localises to the secreted. This chain is Brain ribonuclease (BRN), found in Bos taurus (Bovine).